Consider the following 294-residue polypeptide: MIRLRTLIEKNRSESRKKIVSSTLDSLPEGCISNIISFTSPEDACVAAAVSKIFESAVKSDIVWEKFLPTDYESLITPSRVFSSKKELYFSLCNDPLLIEDGKMSLWLEKASGKRCIMLSATAMNLSSMADMSQRFLWIPCPESRFETVAALREAYRFEFNCRMNTRVLSLRTRYSVYIVFKKADNWCGFKGVSIEAVVGIVGEESFRSFICFDTHGKGQARKRKVVAKPELREDGWMETEIGEFYNEGGLMSSDEVEISTVEGKYAQQKRGLVILGIEIRPAKILEEFSVCRL.

Residues serine 21 to phenylalanine 67 enclose the F-box domain.

In terms of assembly, part of a SCF (SKP1-cullin-F-box) protein ligase complex. Interacts with SKP1A/ASK1.

The protein operates within protein modification; protein ubiquitination. This chain is F-box protein SKIP3 (SKIP3), found in Arabidopsis thaliana (Mouse-ear cress).